Reading from the N-terminus, the 364-residue chain is Myeloid cell surface antigen CD33 (364 aa).

The signal sequence occupies residues 1 to 17 (MPLLLLLPLLWAGALAM). Residues 18-259 (DPNFWLQVQE…KQETRAGVVH (242 aa)) lie on the Extracellular side of the membrane. The Ig-like V-type domain occupies 19 to 135 (PNFWLQVQES…KYSYKSPQLS (117 aa)). 3 cysteine pairs are disulfide-bonded: C36–C169, C41–C101, and C163–C212. Residues N100 and N113 are each glycosylated (N-linked (GlcNAc...) asparagine). R119 is an N-acetylneuraminate binding site. In terms of domain architecture, Ig-like C2-type spans 145–228 (PKILIPGTLE…AGVTTERTIQ (84 aa)). E154 provides a ligand contact to D-galactose. Residues N160, N209, and N230 are each glycosylated (N-linked (GlcNAc...) asparagine). Residues 260–282 (GAIGGAGVTALLALCLCLIFFIV) form a helical membrane-spanning segment. Residues 283–364 (KTHRRKAART…STEYSEVRTQ (82 aa)) lie on the Cytoplasmic side of the membrane. Residues 290-364 (ARTAVGRNDT…STEYSEVRTQ (75 aa)) form a disordered region. Short sequence motifs (ITIM motif) lie at residues 338-343 (LHYASL) and 356-361 (TEYSEV). Phosphotyrosine; by LCK occurs at positions 340 and 358.

This sequence belongs to the immunoglobulin superfamily. SIGLEC (sialic acid binding Ig-like lectin) family. As to quaternary structure, homodimer; disulfide-linked. Interacts with PTPN6/SHP-1 and PTPN11/SHP-2 upon phosphorylation. Interacts with C1QA (via C-terminus); this interaction activates CD33 inhibitory motifs. Post-translationally, glycosylated. Glycosylation at Asn-100 is critical for regulating ligand recognition. Phosphorylation of Tyr-340 is involved in binding to PTPN6 and PTPN11. Phosphorylation of Tyr-358 is involved in binding to PTPN6. LCK phosphorylates Tyr-340 efficiently and Tyr-358 to a lesser extent. As to expression, monocytic/myeloid lineage cells. In the brain, CD33 is mainly expressed on microglial cells.

The protein localises to the cell membrane. It is found in the peroxisome. Functionally, sialic-acid-binding immunoglobulin-like lectin (Siglec) that plays a role in mediating cell-cell interactions and in maintaining immune cells in a resting state. Preferentially recognizes and binds alpha-2,3- and more avidly alpha-2,6-linked sialic acid-bearing glycans. Upon engagement of ligands such as C1q or syalylated glycoproteins, two immunoreceptor tyrosine-based inhibitory motifs (ITIMs) located in CD33 cytoplasmic tail are phosphorylated by Src-like kinases such as LCK. These phosphorylations provide docking sites for the recruitment and activation of protein-tyrosine phosphatases PTPN6/SHP-1 and PTPN11/SHP-2. In turn, these phosphatases regulate downstream pathways through dephosphorylation of signaling molecules. One of the repressive effect of CD33 on monocyte activation requires phosphoinositide 3-kinase/PI3K. This Homo sapiens (Human) protein is Myeloid cell surface antigen CD33 (CD33).